Consider the following 149-residue polypeptide: Secreted RxLR effector protein 47 (149 aa).

The signal sequence occupies residues 1–22 (MICLLPLIAVMLFVFATHTVLA). Residues 57–79 (RFLRQETTFEEKPSVNDVHAEER) carry the RxLR-dEER motif.

This sequence belongs to the RxLR effector family.

Its subcellular location is the secreted. It localises to the host membrane. In terms of biological role, secreted effector that completely suppresses the host cell death induced by cell death-inducing proteins. This is Secreted RxLR effector protein 47 from Plasmopara viticola (Downy mildew of grapevine).